Here is a 182-residue protein sequence, read N- to C-terminus: Transcription termination/antitermination protein NusG (182 aa).

The KOW domain occupies 131–161; the sequence is GEVVRVNDGPFADFNGTVEEVDYEKSRLKVS.

The protein belongs to the NusG family.

Functionally, participates in transcription elongation, termination and antitermination. This Vibrio cholerae serotype O1 (strain ATCC 39315 / El Tor Inaba N16961) protein is Transcription termination/antitermination protein NusG.